The sequence spans 387 residues: Succinate--CoA ligase [ADP-forming] subunit beta (387 aa).

ATP-binding positions include K46, 53 to 55 (GRG), E99, A102, and E107. Residues N199 and D213 each coordinate Mg(2+). Substrate contacts are provided by residues N264 and 321–323 (GIV).

Belongs to the succinate/malate CoA ligase beta subunit family. Heterotetramer of two alpha and two beta subunits. The cofactor is Mg(2+).

The catalysed reaction is succinate + ATP + CoA = succinyl-CoA + ADP + phosphate. The enzyme catalyses GTP + succinate + CoA = succinyl-CoA + GDP + phosphate. The protein operates within carbohydrate metabolism; tricarboxylic acid cycle; succinate from succinyl-CoA (ligase route): step 1/1. Succinyl-CoA synthetase functions in the citric acid cycle (TCA), coupling the hydrolysis of succinyl-CoA to the synthesis of either ATP or GTP and thus represents the only step of substrate-level phosphorylation in the TCA. The beta subunit provides nucleotide specificity of the enzyme and binds the substrate succinate, while the binding sites for coenzyme A and phosphate are found in the alpha subunit. This chain is Succinate--CoA ligase [ADP-forming] subunit beta, found in Campylobacter jejuni subsp. doylei (strain ATCC BAA-1458 / RM4099 / 269.97).